The primary structure comprises 332 residues: Holliday junction branch migration complex subunit RuvB (332 aa).

The interval 1–181 is large ATPase domain (RuvB-L); it reads MSRILDNEIM…FGITGHMEYY (181 aa). ATP-binding positions include Leu-20, Arg-21, Gly-62, Lys-65, Thr-66, Thr-67, 128–130, Arg-171, Tyr-181, and Arg-218; that span reads EDF. Thr-66 is a binding site for Mg(2+). Residues 182–252 form a small ATPAse domain (RuvB-S) region; the sequence is AHADLTEIVE…ITDKALTMLD (71 aa). Residues 255 to 332 are head domain (RuvB-H); it reads HEGLDYVDQK…EHLGYEYSEK (78 aa). 4 residues coordinate DNA: Arg-291, Arg-310, Arg-312, and Arg-315.

It belongs to the RuvB family. In terms of assembly, homohexamer. Forms an RuvA(8)-RuvB(12)-Holliday junction (HJ) complex. HJ DNA is sandwiched between 2 RuvA tetramers; dsDNA enters through RuvA and exits via RuvB. An RuvB hexamer assembles on each DNA strand where it exits the tetramer. Each RuvB hexamer is contacted by two RuvA subunits (via domain III) on 2 adjacent RuvB subunits; this complex drives branch migration. In the full resolvosome a probable DNA-RuvA(4)-RuvB(12)-RuvC(2) complex forms which resolves the HJ.

The protein localises to the cytoplasm. The catalysed reaction is ATP + H2O = ADP + phosphate + H(+). Functionally, the RuvA-RuvB-RuvC complex processes Holliday junction (HJ) DNA during genetic recombination and DNA repair, while the RuvA-RuvB complex plays an important role in the rescue of blocked DNA replication forks via replication fork reversal (RFR). RuvA specifically binds to HJ cruciform DNA, conferring on it an open structure. The RuvB hexamer acts as an ATP-dependent pump, pulling dsDNA into and through the RuvAB complex. RuvB forms 2 homohexamers on either side of HJ DNA bound by 1 or 2 RuvA tetramers; 4 subunits per hexamer contact DNA at a time. Coordinated motions by a converter formed by DNA-disengaged RuvB subunits stimulates ATP hydrolysis and nucleotide exchange. Immobilization of the converter enables RuvB to convert the ATP-contained energy into a lever motion, pulling 2 nucleotides of DNA out of the RuvA tetramer per ATP hydrolyzed, thus driving DNA branch migration. The RuvB motors rotate together with the DNA substrate, which together with the progressing nucleotide cycle form the mechanistic basis for DNA recombination by continuous HJ branch migration. Branch migration allows RuvC to scan DNA until it finds its consensus sequence, where it cleaves and resolves cruciform DNA. In Streptococcus pneumoniae serotype 2 (strain D39 / NCTC 7466), this protein is Holliday junction branch migration complex subunit RuvB.